A 158-amino-acid chain; its full sequence is Disease resistance response protein DRRG49-C (158 aa).

This sequence belongs to the BetVI family.

The protein is Disease resistance response protein DRRG49-C of Pisum sativum (Garden pea).